The chain runs to 537 residues: Eukaryotic translation initiation factor 3 subunit L (537 aa).

One can recognise a PCI domain in the interval 301-513; the sequence is TFSSILLYIQ…IHIADTKVSH (213 aa).

It belongs to the eIF-3 subunit L family. Component of the eukaryotic translation initiation factor 3 (eIF-3) complex.

The protein resides in the cytoplasm. Functionally, component of the eukaryotic translation initiation factor 3 (eIF-3) complex, which is involved in protein synthesis of a specialized repertoire of mRNAs and, together with other initiation factors, stimulates binding of mRNA and methionyl-tRNAi to the 40S ribosome. The eIF-3 complex specifically targets and initiates translation of a subset of mRNAs involved in cell proliferation. The chain is Eukaryotic translation initiation factor 3 subunit L from Aedes aegypti (Yellowfever mosquito).